The chain runs to 526 residues: Reticulocyte-binding protein homolog 5 (526 aa).

The N-terminal stretch at 1–24 (MIRIKKKLILTIIYIHLFILNRLS) is a signal peptide. Positions 33 to 51 (KNQENNLTLLPIKSTEEEK) are mediates interaction with human BSG. Residues Asn-38 and Asn-214 are each glycosylated (N-linked (GlcNAc...) asparagine). 2 disulfides stabilise this stretch: Cys-224–Cys-317 and Cys-345–Cys-351. Over residues 259-279 (EIDDKSEETDDETEEVEDSIQ) the composition is skewed to acidic residues. The segment at 259-294 (EIDDKSEETDDETEEVEDSIQDTDSNHTPSNKKKND) is disordered. Asn-297 is a glycosylation site (N-linked (GlcNAc...) asparagine).

Forms a complex composed of RH5, P113 and human BSG/basigin; the complex bridges the merozoite and host erythrocyte membranes. Within the complex, interacts (via C-terminus) with human BSG/basigin isoform 2 (via the extracellular domain); the interaction is independent of BSG glycosylation status. Weakly interacts with P.troglodytes BSG but not with G.gorilla BSG. Also, interacts (via N-terminus) with P113; the interaction tethers RH5 to the merozoite membrane. Component of the PfRH5 adhesion complex composed of 1 copy of CyRPA, RH5 and RIPR; the complex is formed during merozoite invasion of host erythrocytes specifically at the interface between the parasite and host membranes. Within the complex, interacts with CyRPA. CyRPA recruits RIPR to the RH5-P113-BSG complex; the formation of the PfRH5 adhesion complex increases the affinity of RH5 for BSG and probably leads to the release of RH5 from P113 while maintaining the interaction of the PfRH5 adhesion complex with BSG. Cleaved into a 45kDa form during merozoite invasion of host erythrocyte.

Its subcellular location is the secreted. The protein resides in the cytoplasmic vesicle. It is found in the secretory vesicle. It localises to the rhoptry lumen. The protein localises to the host cell membrane. Functionally, essential for the invasion of host erythrocytes by blood stage merozoites. By binding P113 at the surface of the merozoite and human BSG/basigin on the erythrocyte membrane, leads to the establishment of a tight junction between the merozoite and host erythrocyte membranes. In addition, the interaction with BSG results in BSG dimerization which triggers an increase in intracellular Ca(2+) in the erythrocyte. This essential step leads to a rearrangement of the erythrocyte cytoskeleton required for the merozoite invasion. The polypeptide is Reticulocyte-binding protein homolog 5 (Plasmodium falciparum (isolate 3D7)).